The chain runs to 752 residues: MAP/microtubule affinity-regulating kinase 4 (752 aa).

Residues 1-36 (MSSRTVLAPGNDRNSDTHGTLGSGRSSDKGPSWSSR) are disordered. The Protein kinase domain occupies 59–310 (YRLLRTIGKG…LEQIMKDKWI (252 aa)). Residues 65–73 (IGKGNFAKV) and Lys-88 contribute to the ATP site. The Proton acceptor role is filled by Asp-181. At Thr-214 the chain carries Phosphothreonine; by LKB1. The region spanning 324–368 (EPEEDFGDTKRIEVMVGMGYTREEIKESLTSQKYNEVTATYLLLG) is the UBA domain. Residues 385–614 (ARVRAPSDTT…PAGRPRPTTN (230 aa)) form a disordered region. Residues 391–406 (SDTTNGTSSSKGTSHS) are compositionally biased toward low complexity. Phosphoserine occurs at positions 423 and 543. The segment covering 544 to 553 (PSSHSLAPPS) has biased composition (low complexity). The 50-residue stretch at 703 to 752 (AGGPEPLSHFEVEVCQLPRPGLRGVLFRRVAGTALAFRTLVTRISNDLEL) folds into the KA1 domain.

Belongs to the protein kinase superfamily. CAMK Ser/Thr protein kinase family. SNF1 subfamily. Interacts with MAPT/TAU. Interacts with gamma-tubulin. Interacts with ODF2. Interacts with USP9X. Interacts with YWHAQ. Interacts with NLRP3; promoting NLRP3 recruitment to microtubule organizing center (MTOC). It depends on Mg(2+) as a cofactor. Ubiquitinated with 'Lys-29'- and 'Lys-33'-linked polyubiquitins which appear to impede LKB1-mediated phosphorylation. Deubiquitinated by USP9X. Post-translationally, phosphorylated at Thr-214 by STK11/LKB1 in complex with STE20-related adapter-alpha (STRADA) pseudo kinase and CAB39. Phosphorylated throughout the cell cycle. In terms of tissue distribution, ubiquitous. Isoform 2 is brain-specific. Expressed at highest levels in brain and testis. Also expressed in heart, lung, liver, muscle, kidney and spleen.

Its subcellular location is the cytoplasm. It localises to the cytoskeleton. The protein resides in the microtubule organizing center. It is found in the centrosome. The protein localises to the cilium basal body. Its subcellular location is the cilium axoneme. It localises to the cell projection. The protein resides in the dendrite. It carries out the reaction L-seryl-[protein] + ATP = O-phospho-L-seryl-[protein] + ADP + H(+). The enzyme catalyses L-threonyl-[protein] + ATP = O-phospho-L-threonyl-[protein] + ADP + H(+). With respect to regulation, activated by phosphorylation on Thr-214. Its function is as follows. Serine/threonine-protein kinase. Phosphorylates the microtubule-associated protein MAPT/TAU. Also phosphorylates the microtubule-associated proteins MAP2 and MAP4. Involved in regulation of the microtubule network, causing reorganization of microtubules into bundles. Required for the initiation of axoneme extension during cilium assembly. Regulates the centrosomal location of ODF2 and phosphorylates ODF2 in vitro. Plays a role in cell cycle progression, specifically in the G1/S checkpoint. Reduces neuronal cell survival. Plays a role in energy homeostasis by regulating satiety and metabolic rate. Promotes adipogenesis by activating JNK1 and inhibiting the p38MAPK pathway, and triggers apoptosis by activating the JNK1 pathway. Phosphorylates mTORC1 complex member RPTOR and acts as a negative regulator of the mTORC1 complex, probably due to disruption of the interaction between phosphorylated RPTOR and the RRAGA/RRAGC heterodimer which is required for mTORC1 activation. Involved in NLRP3 positioning along microtubules by mediating NLRP3 recruitment to microtubule organizing center (MTOC) upon inflammasome activation. The polypeptide is MAP/microtubule affinity-regulating kinase 4 (Homo sapiens (Human)).